The sequence spans 274 residues: Large ribosomal subunit protein uL2cz/uL2cy (274 aa).

Disordered regions lie at residues 1–20 (MAIH…AVDS) and 223–274 (MNPV…RRSK).

The protein belongs to the universal ribosomal protein uL2 family. As to quaternary structure, part of the 50S ribosomal subunit.

The protein resides in the plastid. The protein localises to the chloroplast. The chain is Large ribosomal subunit protein uL2cz/uL2cy (rpl2-A) from Eucalyptus globulus subsp. globulus (Tasmanian blue gum).